The sequence spans 310 residues: Porphobilinogen deaminase (310 aa).

Cysteine 242 carries the post-translational modification S-(dipyrrolylmethanemethyl)cysteine.

The protein belongs to the HMBS family. Monomer. Requires dipyrromethane as cofactor.

The catalysed reaction is 4 porphobilinogen + H2O = hydroxymethylbilane + 4 NH4(+). It participates in porphyrin-containing compound metabolism; protoporphyrin-IX biosynthesis; coproporphyrinogen-III from 5-aminolevulinate: step 2/4. In terms of biological role, tetrapolymerization of the monopyrrole PBG into the hydroxymethylbilane pre-uroporphyrinogen in several discrete steps. The protein is Porphobilinogen deaminase of Shewanella pealeana (strain ATCC 700345 / ANG-SQ1).